The chain runs to 427 residues: Glutamate-1-semialdehyde 2,1-aminomutase (427 aa).

K265 bears the N6-(pyridoxal phosphate)lysine mark.

This sequence belongs to the class-III pyridoxal-phosphate-dependent aminotransferase family. HemL subfamily. As to quaternary structure, homodimer. Requires pyridoxal 5'-phosphate as cofactor.

The protein resides in the cytoplasm. It catalyses the reaction (S)-4-amino-5-oxopentanoate = 5-aminolevulinate. The protein operates within porphyrin-containing compound metabolism; protoporphyrin-IX biosynthesis; 5-aminolevulinate from L-glutamyl-tRNA(Glu): step 2/2. This chain is Glutamate-1-semialdehyde 2,1-aminomutase, found in Bordetella petrii (strain ATCC BAA-461 / DSM 12804 / CCUG 43448).